We begin with the raw amino-acid sequence, 76 residues long: Putative defensin-like protein 62 (76 aa).

Residues 1-26 (MDVTKTYVTIFVVAILTISVLIQIQQ) form the signal peptide. 4 disulfide bridges follow: Cys-30–Cys-71, Cys-34–Cys-57, Cys-43–Cys-69, and Cys-47–Cys-70.

It belongs to the DEFL family.

It localises to the secreted. The polypeptide is Putative defensin-like protein 62 (Arabidopsis thaliana (Mouse-ear cress)).